An 81-amino-acid polypeptide reads, in one-letter code: ATP synthase subunit c, chloroplastic (81 aa).

A run of 2 helical transmembrane segments spans residues 7 to 27 (AASV…PGIG) and 57 to 77 (LAFM…LLFA).

This sequence belongs to the ATPase C chain family. F-type ATPases have 2 components, F(1) - the catalytic core - and F(0) - the membrane proton channel. F(1) has five subunits: alpha(3), beta(3), gamma(1), delta(1), epsilon(1). F(0) has four main subunits: a(1), b(1), b'(1) and c(10-14). The alpha and beta chains form an alternating ring which encloses part of the gamma chain. F(1) is attached to F(0) by a central stalk formed by the gamma and epsilon chains, while a peripheral stalk is formed by the delta, b and b' chains.

It is found in the plastid. It localises to the chloroplast thylakoid membrane. Its function is as follows. F(1)F(0) ATP synthase produces ATP from ADP in the presence of a proton or sodium gradient. F-type ATPases consist of two structural domains, F(1) containing the extramembraneous catalytic core and F(0) containing the membrane proton channel, linked together by a central stalk and a peripheral stalk. During catalysis, ATP synthesis in the catalytic domain of F(1) is coupled via a rotary mechanism of the central stalk subunits to proton translocation. Functionally, key component of the F(0) channel; it plays a direct role in translocation across the membrane. A homomeric c-ring of between 10-14 subunits forms the central stalk rotor element with the F(1) delta and epsilon subunits. This is ATP synthase subunit c, chloroplastic from Staurastrum punctulatum (Green alga).